Here is a 607-residue protein sequence, read N- to C-terminus: Thymidine kinase (607 aa).

Disordered stretches follow at residues 1 to 160 (MAGF…ADST) and 180 to 215 (DDKSDCESEDESNFRRPSSHSALKQKNGGKGKPSGL). Residues 17-32 (KCQEDESPENERHENF) are compositionally biased toward basic and acidic residues. Composition is skewed to polar residues over residues 88-106 (AAVTSNTGNSPGSRHTSCP), 148-160 (RKTSCTEGGADST), and 194-203 (RRPSSHSALK). 291-298 (GAPGVGKT) lines the ATP pocket. The active-site Proton acceptor is glutamate 317. Residue glutamine 355 coordinates substrate. Position 445 (arginine 445) interacts with ATP. Position 451 (arginine 451) interacts with substrate.

Belongs to the herpesviridae thymidine kinase family. Homodimer.

Its subcellular location is the virion tegument. The protein localises to the host nucleus. It catalyses the reaction thymidine + ATP = dTMP + ADP + H(+). Its function is as follows. Catalyzes the transfer of the gamma-phospho group of ATP to thymidine to generate dTMP in the salvage pathway of pyrimidine synthesis. The dTMP serves as a substrate for DNA polymerase during viral DNA replication. Allows the virus to be reactivated and to grow in non-proliferative cells lacking a high concentration of phosphorylated nucleic acid precursors. In Epstein-Barr virus (strain AG876) (HHV-4), this protein is Thymidine kinase.